The following is a 100-amino-acid chain: Small ribosomal subunit protein uS14c (100 aa).

It belongs to the universal ribosomal protein uS14 family. In terms of assembly, part of the 30S ribosomal subunit.

It localises to the plastid. It is found in the chloroplast. Its function is as follows. Binds 16S rRNA, required for the assembly of 30S particles. This Ostreococcus tauri protein is Small ribosomal subunit protein uS14c.